Reading from the N-terminus, the 329-residue chain is Phospho-N-acetylmuramoyl-pentapeptide-transferase (329 aa).

The next 9 membrane-spanning stretches (helical) occupy residues 1–21, 53–73, 76–96, 109–129, 141–161, 175–195, 198–218, 237–257, and 309–329; these read MLLNGIVAAVITMIITIIGIP, MGGFVFVVVSLVVSLVAALVF, FSPAFITAWWVFAMYAVIGFL, GLTAKQKMLAQILIGIVSYFI, ILSWQVNIGIFFSIFIIIWLV, GLASITVAISLTAYAVIAVVH, YDVLLIILSVIGGLLGFFVFN, FLAIVSILLHAEWTLLLIGAV, and IVFWLFTAVLSVIALCIYFAF.

It belongs to the glycosyltransferase 4 family. MraY subfamily. The cofactor is Mg(2+).

The protein resides in the cell membrane. It catalyses the reaction UDP-N-acetyl-alpha-D-muramoyl-L-alanyl-gamma-D-glutamyl-L-lysyl-D-alanyl-D-alanine + di-trans,octa-cis-undecaprenyl phosphate = Mur2Ac(oyl-L-Ala-gamma-D-Glu-L-Lys-D-Ala-D-Ala)-di-trans,octa-cis-undecaprenyl diphosphate + UMP. Its pathway is cell wall biogenesis; peptidoglycan biosynthesis. Functionally, catalyzes the initial step of the lipid cycle reactions in the biosynthesis of the cell wall peptidoglycan: transfers peptidoglycan precursor phospho-MurNAc-pentapeptide from UDP-MurNAc-pentapeptide onto the lipid carrier undecaprenyl phosphate, yielding undecaprenyl-pyrophosphoryl-MurNAc-pentapeptide, known as lipid I. The chain is Phospho-N-acetylmuramoyl-pentapeptide-transferase from Lactococcus lactis subsp. cremoris (strain SK11).